Reading from the N-terminus, the 315-residue chain is Tetratricopeptide repeat protein 23-like (315 aa).

Residues lysine 28–lysine 56 form a disordered region. Coiled coils occupy residues arginine 65–glutamate 90, arginine 179–lysine 200, and serine 250–histidine 280.

It is found in the cytoplasm. The protein resides in the cytoskeleton. It localises to the microtubule organizing center. Its subcellular location is the centrosome. The protein localises to the spindle. It is found in the midbody. In Bos taurus (Bovine), this protein is Tetratricopeptide repeat protein 23-like (TTC23L).